Here is a 421-residue protein sequence, read N- to C-terminus: Zinc finger protein 584 (421 aa).

Positions 17–88 (VMFEDVTVYF…SWVDVTPVSR (72 aa)) constitute a KRAB domain. The span at 120–129 (QHQDTHSEGK) shows a compositional bias: basic and acidic residues. Positions 120-146 (QHQDTHSEGKPRRHTEHGAAFPPGSSC) are disordered. 8 consecutive C2H2-type zinc fingers follow at residues 159–181 (FKCS…LITH), 214–236 (HVCN…QKVH), 242–264 (FKCS…QRIH), 270–292 (YECS…RKVH), 298–320 (YECT…QRVH), 326–348 (FECK…WKVH), 354–376 (YECS…QQFH), and 382–404 (YECT…KKVH). Residues 402–421 (KVHTPERRQEDRAHGKVVSC) form a disordered region. Residues 404–415 (HTPERRQEDRAH) show a composition bias toward basic and acidic residues.

The protein belongs to the krueppel C2H2-type zinc-finger protein family.

Its subcellular location is the nucleus. In terms of biological role, may be involved in transcriptional regulation. This chain is Zinc finger protein 584 (ZNF584), found in Homo sapiens (Human).